The primary structure comprises 323 residues: O-phosphoserine sulfhydrylase (323 aa).

An N6-(pyridoxal phosphate)lysine modification is found at Lys-51. Pyridoxal 5'-phosphate-binding positions include Asn-81 and Gly-184–Thr-188. Residue Arg-220 coordinates substrate. A pyridoxal 5'-phosphate-binding site is contributed by Ser-265.

It belongs to the cysteine synthase/cystathionine beta-synthase family. As to quaternary structure, homodimer. Requires pyridoxal 5'-phosphate as cofactor.

It carries out the reaction [CysO sulfur-carrier protein]-C-terminal-Gly-aminoethanethioate + O-phospho-L-serine + H(+) = [CysO sulfur-carrier protein]-Gly-NH-CH2-C(O)-S-L-Cys + phosphate. Its pathway is amino-acid biosynthesis; L-cysteine biosynthesis. Catalyzes the formation of a covalent CysO-cysteine adduct via a sulfur transfer, using the thiocarboxylated sulfur carrier protein CysO-COSH as sulfur donor and O-phospho-L-serine (OPS) as sulfur acceptor. Can also use sodium sulfide as sulfur donor in vitro, albeit with less efficiency. The sequence is that of O-phosphoserine sulfhydrylase (cysM) from Mycobacterium bovis (strain ATCC BAA-935 / AF2122/97).